The primary structure comprises 84 residues: Cell division topological specificity factor (84 aa).

Belongs to the MinE family.

Prevents the cell division inhibition by proteins MinC and MinD at internal division sites while permitting inhibition at polar sites. This ensures cell division at the proper site by restricting the formation of a division septum at the midpoint of the long axis of the cell. This chain is Cell division topological specificity factor, found in Cupriavidus necator (strain ATCC 17699 / DSM 428 / KCTC 22496 / NCIMB 10442 / H16 / Stanier 337) (Ralstonia eutropha).